Consider the following 399-residue polypeptide: Myb-related transcription factor, partner of profilin (399 aa).

The Myb-like domain occupies 12-84 (TTRLRKPRFS…EVQKRWNDFK (73 aa)). A Nuclear localization signal motif is present at residues 83–86 (FKRR). 4 disordered regions span residues 87–108 (TKEKLARVPHSTQGAGPAAEDA), 127–261 (PGAG…PSLD), 297–332 (LLPGTPVDSLPPPLPPPPPPPPPPRPVLPPPAPKVE), and 358–399 (APRS…WKSP). Positions 127–136 (PGAGAGAEEP) are enriched in low complexity. A compositionally biased stretch (pro residues) spans 137 to 149 (PAAPSSQPPPPSA). Positions 156–170 (LSEDRREDRRADTSA) are enriched in basic and acidic residues. 3 stretches are compositionally biased toward pro residues: residues 219 to 252 (SPPPPAPPLPPPPPLAQVAPSPPSPPPPPRPPPT), 305 to 329 (SLPPPLPPPPPPPPPPRPVLPPPAP), and 366 to 377 (PRPPPAPLPPHD). Basic residues predominate over residues 381–399 (HKRRKGFPTRKRRGRWKSP). 2 consecutive short sequence motifs (nuclear localization signal) follow at residues 382–385 (KRRK) and 390–393 (RKRR).

As to quaternary structure, interacts with PFN1. Homodimer and heterodimer with PFN1.

It localises to the nucleus. Its function is as follows. Transcriptional repressor; DNA-binding protein that specifically recognizes the core sequence 5'-YAAC[GT]G-3'. Dimerization with PFN1 reduces its DNA-binding capacity. In Homo sapiens (Human), this protein is Myb-related transcription factor, partner of profilin (MYPOP).